Reading from the N-terminus, the 245-residue chain is 1-(5-phosphoribosyl)-5-[(5-phosphoribosylamino)methylideneamino] imidazole-4-carboxamide isomerase (245 aa).

The Proton acceptor role is filled by Asp-8. Asp-130 serves as the catalytic Proton donor.

The protein belongs to the HisA/HisF family.

It is found in the cytoplasm. It catalyses the reaction 1-(5-phospho-beta-D-ribosyl)-5-[(5-phospho-beta-D-ribosylamino)methylideneamino]imidazole-4-carboxamide = 5-[(5-phospho-1-deoxy-D-ribulos-1-ylimino)methylamino]-1-(5-phospho-beta-D-ribosyl)imidazole-4-carboxamide. It participates in amino-acid biosynthesis; L-histidine biosynthesis; L-histidine from 5-phospho-alpha-D-ribose 1-diphosphate: step 4/9. This Pseudomonas fluorescens (strain Pf0-1) protein is 1-(5-phosphoribosyl)-5-[(5-phosphoribosylamino)methylideneamino] imidazole-4-carboxamide isomerase.